The chain runs to 93 residues: uncharacterized protein (93 aa).

This is an uncharacterized protein from Bacillus subtilis (strain 168).